We begin with the raw amino-acid sequence, 300 residues long: Integrin-binding sialoprotein (300 aa).

Residues 41-258 form a disordered region; the sequence is RFPVQSSSDS…YEQTGAHEYD (218 aa). Residues S46, S51, S59, S60, S82, and S90 each carry the phosphoserine modification. Low complexity predominate over residues 46 to 58; the sequence is SSSDSSEENGNGD. Acidic residues predominate over residues 59 to 92; it reads SSEEEEEEEENSNEEENNEENEDSDGNEDEDSEA. The segment covering 93–102 has biased composition (polar residues); that stretch reads ENITLSTTTL. A glycan (N-linked (GlcNAc...) asparagine) is linked at N94. Residues 125–136 are compositionally biased toward basic and acidic residues; sequence KAGDIGKKSAKE. Acidic residues predominate over residues 137 to 160; that stretch reads EESDEDEEEEEENEENEAEVDDNE. S139 carries the post-translational modification Phosphoserine. 3 stretches are compositionally biased toward polar residues: residues 161 to 173, 193 to 202, and 229 to 243; these read QGTN…STEV, VTEAQGTTVA, and ISGT…TTTP. 2 N-linked (GlcNAc...) asparagine glycosylation sites follow: N164 and N169. S266 carries the phosphoserine modification. The Integrin-binding motif signature appears at 272 to 274; sequence RGD. Residue S293 is modified to Phosphoserine. A sulfotyrosine mark is found at Y299 and Y300.

Monomer. Interacts with integrins; the interaction promotes cell adhesion.

The protein localises to the secreted. Binds tightly to hydroxyapatite. Appears to form an integral part of the mineralized matrix. Probably important to cell-matrix interaction. Promotes adhesion and migration of various cells via the alpha-V/beta-3 integrin receptor (ITGAV:ITGB3). The protein is Integrin-binding sialoprotein (IBSP) of Sus scrofa (Pig).